We begin with the raw amino-acid sequence, 182 residues long: Adenine phosphoribosyltransferase (182 aa).

It belongs to the purine/pyrimidine phosphoribosyltransferase family. As to quaternary structure, homodimer.

Its subcellular location is the cytoplasm. It carries out the reaction AMP + diphosphate = 5-phospho-alpha-D-ribose 1-diphosphate + adenine. Its pathway is purine metabolism; AMP biosynthesis via salvage pathway; AMP from adenine: step 1/1. Catalyzes a salvage reaction resulting in the formation of AMP, that is energically less costly than de novo synthesis. In Saccharopolyspora erythraea (strain ATCC 11635 / DSM 40517 / JCM 4748 / NBRC 13426 / NCIMB 8594 / NRRL 2338), this protein is Adenine phosphoribosyltransferase.